We begin with the raw amino-acid sequence, 415 residues long: Tyrosine--tRNA ligase (415 aa).

The short motif at 54–63 (PTGSNIHLGH) is the 'HIGH' region element. Residues 248–252 (KMSKS) carry the 'KMSKS' region motif. An ATP-binding site is contributed by lysine 251. The S4 RNA-binding domain occupies 351–414 (AKAFYLFSAV…LGKKTFRRLV (64 aa)).

It belongs to the class-I aminoacyl-tRNA synthetase family. TyrS type 2 subfamily. In terms of assembly, homodimer.

It localises to the cytoplasm. The catalysed reaction is tRNA(Tyr) + L-tyrosine + ATP = L-tyrosyl-tRNA(Tyr) + AMP + diphosphate + H(+). In terms of biological role, catalyzes the attachment of tyrosine to tRNA(Tyr) in a two-step reaction: tyrosine is first activated by ATP to form Tyr-AMP and then transferred to the acceptor end of tRNA(Tyr). The polypeptide is Tyrosine--tRNA ligase (Synechococcus sp. (strain CC9605)).